The sequence spans 1110 residues: Nonribisomal peptide synthetase benY (1110 aa).

An adenylation region spans residues 47–443 (RALEFPEKIA…GRKDHQLKVR (397 aa)). A Carrier domain is found at 575 to 651 (TLETESEKIL…EMAQSARVVP (77 aa)). Residue serine 612 is modified to O-(pantetheine 4'-phosphoryl)serine. Residues 713-1025 (YILDGDVDFD…IFHHQNIDTK (313 aa)) are condensation.

The protein belongs to the NRP synthetase family.

The protein operates within secondary metabolite biosynthesis. In terms of biological role, nonribisomal peptide synthetase; part of the gene cluster that mediates the biosynthesis of benzomalvin A and D. The pathway begins with the loading of amino acid precursors onto the A domains of the non ribosomal peptide synthetases benY and benZ. BenY and the A1 domain of benZ are loaded with anthranilate (Anth), while the A2 domain of benZ is loaded with phenylalanine (Phe). N-methylation of Phe by the methyltransferase benX may happen before loading of Phe onto benZ, after loading of Phe, or after dipeptide formation. Condensation of Anth with the secondary amine of NmPhe or Phe is catalyzed by the C1 domain of benZ, forming a dipeptide intermediate. This is followed by in trans condensation of the Anth-NmPhe dipeptide with Anth bound to the T domain of benY by the C2 domain of benZ to form the linear tripeptide Anth-NmPhe-Anth. Cyclization and release of the tripeptide is then catalyzed by the C-terminal C domain of benY and the resulting 11-member macrocyclic intermediate is expected to spontaneously collapse to form the benzodiazepine core. Benzomalvin A is in conformational equilibrium with its atropisomer, benzomalvin D. This is Nonribisomal peptide synthetase benY from Aspergillus terreus.